Reading from the N-terminus, the 359-residue chain is Peptide chain release factor 1 (359 aa).

Q235 is modified (N5-methylglutamine).

Belongs to the prokaryotic/mitochondrial release factor family. Post-translationally, methylated by PrmC. Methylation increases the termination efficiency of RF1.

It is found in the cytoplasm. In terms of biological role, peptide chain release factor 1 directs the termination of translation in response to the peptide chain termination codons UAG and UAA. This Nitrosomonas eutropha (strain DSM 101675 / C91 / Nm57) protein is Peptide chain release factor 1.